Reading from the N-terminus, the 3142-residue chain is Huntingtin (3142 aa).

A sufficient for interaction with TPR region spans residues 3-13 (TLEKLMKAFES). Lys-9 is subject to N6-acetyllysine. The disordered stretch occupies residues 14-85 (LKSFQQQQQQ…PGPAVAEEPL (72 aa)). Over residues 18–37 (QQQQQQQQQQQQQQQQQQQQ) the composition is skewed to low complexity. Residues 38–78 (QPPPPPPPPPPPQLPQPPPQAQPLLPQPQPPPPPPPPPPGP) are compositionally biased toward pro residues. An N6-acetyllysine mark is found at Lys-176 and Lys-234. HEAT repeat units lie at residues 204–241 (PYLV…SFGN), 246–283 (NEIK…HSRR), and 316–360 (LTLR…VYEL). N6-acetyllysine is present on Lys-343. Phosphoserine is present on residues Ser-411, Ser-417, Ser-419, and Ser-432. Lys-442 carries the N6-acetyllysine modification. The tract at residues 447-469 (EEEALEDDSESRSDVSSSALTAS) is disordered. The segment at 491–502 (GHDIITEQPRSQ) is interaction with ZDHHC17. Residues 517–583 (LTSSATDGDE…TPSDSSEIVL (67 aa)) are disordered. Residues 531–545 (SHSSSQVSAVPSDPA) show a composition bias toward low complexity. Positions 550–579 (DGTQASSPISDSSQTTTEGPDSAVTPSDSS) are enriched in polar residues. The N-myristoyl glycine moiety is linked to residue Gly-551. Phosphoserine is present on residues Ser-640 and Ser-643. HEAT repeat units follow at residues 802 to 839 (FSLA…SLCS) and 902 to 940 (KLQE…KLFY). The disordered stretch occupies residues 1176–1225 (PSLSPIRRKGKEKEPGEQASVPLSPKKGSEASAASRQSDTSGPVTTSKSS). Phosphoserine; by CDK5 occurs at positions 1179 and 1199. Residues 1207–1225 (SAASRQSDTSGPVTTSKSS) show a composition bias toward polar residues. Phosphoserine occurs at positions 1870 and 1874. The tract at residues 2330–2351 (ERRTNTPKAISEEEEEVDPNTQ) is disordered. Positions 2395-2404 (IIISLARLPL) match the Nuclear export signal motif. The interval 2633-2662 (EEEWDEEEEEEADAPAPSSPPTSPVNSRKH) is disordered. Positions 2634-2645 (EEWDEEEEEEAD) are enriched in acidic residues.

It belongs to the huntingtin family. As to quaternary structure, interacts with PFN1. Interacts through its N-terminus with PRPF40A. Interacts with PQBP1. Interacts with SETD2. Interacts with SH3GLB1. Interacts with SYVN. Interacts with TPR; the interaction is inhibited by forms of Huntingtin with expanded polyglutamine stretch. Interacts with ZDHHC13 (via ANK repeats). Interacts with ZDHHC17 (via ANK repeats). Interacts with F8A1/F8A2/F8A3. Found in a complex with F8A1/F8A2/F8A3, HTT and RAB5A; mediates the recruitment of HTT by RAB5A. Cleaved by caspases downstream of the polyglutamine stretch. The resulting N-terminal fragments are cytotoxic and provokes apoptosis. In terms of processing, forms with expanded polyglutamine expansion are specifically ubiquitinated by SYVN1, which promotes their proteasomal degradation. Post-translationally, phosphorylation at Ser-1179 and Ser-1199 by CDK5 in response to DNA damage in nuclei of neurons protects neurons against polyglutamine expansion as well as DNA damage mediated toxicity. Myristoylated at Gly-551, following proteolytic cleavage at Asp-550. As to expression, expressed in the brain cortex (at protein level). Widely expressed with the highest level of expression in the brain (nerve fibers, varicosities, and nerve endings). In the brain, the regions where it can be mainly found are the cerebellar cortex, the neocortex, the striatum, and the hippocampal formation.

It is found in the cytoplasm. It localises to the nucleus. Its subcellular location is the early endosome. The protein resides in the cytoplasmic vesicle. The protein localises to the autophagosome. Functionally, may play a role in microtubule-mediated transport or vesicle function. Its function is as follows. Promotes the formation of autophagic vesicles. The chain is Huntingtin (HTT) from Homo sapiens (Human).